Consider the following 497-residue polypeptide: Glutamyl-tRNA(Gln) amidotransferase subunit A (497 aa).

Catalysis depends on charge relay system residues lysine 91 and serine 166. The tract at residues 143-171 is disordered; it reads SSTENSAYGPTHNPWDLERTAGGSGGGSS. The active-site Acyl-ester intermediate is the serine 190.

It belongs to the amidase family. GatA subfamily. In terms of assembly, heterotrimer of A, B and C subunits.

The enzyme catalyses L-glutamyl-tRNA(Gln) + L-glutamine + ATP + H2O = L-glutaminyl-tRNA(Gln) + L-glutamate + ADP + phosphate + H(+). Allows the formation of correctly charged Gln-tRNA(Gln) through the transamidation of misacylated Glu-tRNA(Gln) in organisms which lack glutaminyl-tRNA synthetase. The reaction takes place in the presence of glutamine and ATP through an activated gamma-phospho-Glu-tRNA(Gln). The polypeptide is Glutamyl-tRNA(Gln) amidotransferase subunit A (Corynebacterium glutamicum (strain ATCC 13032 / DSM 20300 / JCM 1318 / BCRC 11384 / CCUG 27702 / LMG 3730 / NBRC 12168 / NCIMB 10025 / NRRL B-2784 / 534)).